The primary structure comprises 61 residues: UPF0434 protein PSPA7_2181 (61 aa).

This sequence belongs to the UPF0434 family.

The polypeptide is UPF0434 protein PSPA7_2181 (Pseudomonas paraeruginosa (strain DSM 24068 / PA7) (Pseudomonas aeruginosa (strain PA7))).